The chain runs to 406 residues: Arginine deiminase (406 aa).

Catalysis depends on Cys-396, which acts as the Amidino-cysteine intermediate.

Belongs to the arginine deiminase family.

Its subcellular location is the cytoplasm. It carries out the reaction L-arginine + H2O = L-citrulline + NH4(+). The protein operates within amino-acid degradation; L-arginine degradation via ADI pathway; carbamoyl phosphate from L-arginine: step 1/2. This Salmonella typhimurium (strain LT2 / SGSC1412 / ATCC 700720) protein is Arginine deiminase.